The chain runs to 34 residues: MVNWQVIGQLLSATLIVLAGPAVIFVLAFKKGNL.

The chain crosses the membrane as a helical span at residues 6-26; that stretch reads VIGQLLSATLIVLAGPAVIFV.

This sequence belongs to the Psb30/Ycf12 family. As to quaternary structure, PSII is composed of 1 copy each of membrane proteins PsbA, PsbB, PsbC, PsbD, PsbE, PsbF, PsbH, PsbI, PsbJ, PsbK, PsbL, PsbM, PsbT, PsbX, PsbY, PsbZ, Psb30/Ycf12, peripheral proteins of the oxygen-evolving complex and a large number of cofactors. It forms dimeric complexes.

The protein localises to the plastid. The protein resides in the chloroplast thylakoid membrane. In terms of biological role, a core subunit of photosystem II (PSII), probably helps stabilize the reaction center. This is Photosystem II reaction center protein Psb30 from Heterosigma akashiwo (strain NIES-293 / 8280G21-1).